A 175-amino-acid polypeptide reads, in one-letter code: Large ribosomal subunit protein eL14 (175 aa).

The tract at residues 150–175 (KAAKMDSTEGAKRRMQKAIAARKAKK) is disordered. Residues 152–161 (AKMDSTEGAK) are compositionally biased toward basic and acidic residues. A compositionally biased stretch (basic residues) spans 162–175 (RRMQKAIAARKAKK).

It belongs to the eukaryotic ribosomal protein eL14 family.

Component of the large ribosomal subunit. The ribosome is a large ribonucleoprotein complex responsible for the synthesis of proteins in the cell. The polypeptide is Large ribosomal subunit protein eL14 (RPL14) (Leishmania donovani).